Here is an 831-residue protein sequence, read N- to C-terminus: Leucine--tRNA ligase (831 aa).

Residues 35–45 carry the 'HIGH' region motif; sequence PYPSGKIHVGH. Residues 600 to 604 carry the 'KMSKS' region motif; it reads KMSKS. Lys603 is a binding site for ATP.

This sequence belongs to the class-I aminoacyl-tRNA synthetase family.

The protein localises to the cytoplasm. The enzyme catalyses tRNA(Leu) + L-leucine + ATP = L-leucyl-tRNA(Leu) + AMP + diphosphate. The protein is Leucine--tRNA ligase of Rickettsia bellii (strain RML369-C).